Reading from the N-terminus, the 876-residue chain is Alanine--tRNA ligase (876 aa).

Lys74 carries the post-translational modification N6-acetyllysine. 4 residues coordinate Zn(2+): His564, His568, Cys666, and His670.

It belongs to the class-II aminoacyl-tRNA synthetase family. In terms of assembly, homotetramer. Zn(2+) serves as cofactor.

It is found in the cytoplasm. It carries out the reaction tRNA(Ala) + L-alanine + ATP = L-alanyl-tRNA(Ala) + AMP + diphosphate. Its function is as follows. Catalyzes the attachment of alanine to tRNA(Ala) in a two-step reaction: alanine is first activated by ATP to form Ala-AMP and then transferred to the acceptor end of tRNA(Ala). Also edits incorrectly charged Ser-tRNA(Ala) and Gly-tRNA(Ala) via its editing domain. The protein is Alanine--tRNA ligase of Shigella boydii serotype 4 (strain Sb227).